A 443-amino-acid chain; its full sequence is Monooxygenase asqM (443 aa).

It belongs to the aromatic-ring hydroxylase family. It depends on FAD as a cofactor.

The protein operates within secondary metabolite biosynthesis. Its pathway is alkaloid biosynthesis. It participates in mycotoxin biosynthesis. Functionally, monooxygenase; part of the gene cluster that mediates the biosynthesis of the aspoquinolone mycotoxins. The role of asqM within the aspoquinolone pathway has still to be determined. The first step of the pathway is catalyzed by the nonribosomal peptide synthetase asqK that condenses anthranilic acid and O-methyl-L-tyrosine to produce 4'-methoxycyclopeptin. 4'-methoxycyclopeptin is then converted to 4'-methoxydehydrocyclopeptin by the ketoglutarate-dependent dioxygenase asqJ. AsqJ also converts its first product 4'-methoxydehydrocyclopeptin to 4'-methoxycyclopenin. The following conversion of 4'-methoxycyclopenin into 4'-methoxyviridicatin is catalyzed by the cyclopenase asqI. 4'-methoxyviridicatin is the precursor of quinolone natural products, and is further converted to quinolinone B. The prenyltransferase asqH1 then catalyzes the canonical Friedel-Crafts alkylation of quinolinone B with dimethylallyl cation to yield dimethylallyl quinolone, which is subjected to FAD-dependent dehydrogenation by the FAD-linked oxidoreductase asqF to yield conjugated aryl diene. The delta(3') double bond then serves as the site of the second alkylation with DMAPP catalyzed by the prenyltransferase asqH2 to yield a carbenium ion intermediate, which can be attacked by H(2)O to yield a styrenyl quinolone containing a C3'-hydroxyprenyl chain. The FAD-dependent monooxygenase asqG performs epoxidation of the terminal C7'-C8' olefin. Finally, after dehydratation of the epoxide at C3 by asqC, the quinolone epoxide rearrangement protein asqO catalyzes an enzymatic 3-exo-tet cyclization to yield the cyclopropyl-THF ring system in aspoquinolone. This Emericella nidulans (strain FGSC A4 / ATCC 38163 / CBS 112.46 / NRRL 194 / M139) (Aspergillus nidulans) protein is Monooxygenase asqM.